The chain runs to 241 residues: HTH-type quorum-sensing regulator RhlR (241 aa).

Residues 174–239 enclose the HTH luxR-type domain; it reads LMSNPVCLSH…LAAAYAAALG (66 aa). A DNA-binding region (H-T-H motif) is located at residues 198-217; that stretch reads SGEIAIILSISESTVNFHHK.

Belongs to the autoinducer-regulated transcriptional regulatory protein family. As to quaternary structure, homodimer in the absence of any acyl-L-homoserine lactone. The presence of the autoinducer C4-HSL has no significant effect on dimerization whereas N-(3-oxododecanoyl)-L-homoserine lactone (3O-C12-HSL), the LasR inducer, is able to dissociate the RhlR homodimers into monomers.

Its subcellular location is the cytoplasm. Its activity is regulated as follows. Activated by interaction with the autoinducer signal molecule N-butanoyl-L-homoserine lactone (C4-HSL or BHL), the product of the RhlI synthase. Is also activated by binding to rosmarinic acid (RA), a homoserine lactone mimic produced by plants, which induces a broad quorum sensing response, including the induction of all major quorum sensing controlled virulence factors. Rosmarinic acid secretion may be a plant defense mechanism to stimulate a premature quorum sensing response. In terms of biological role, quorum-sensing regulator that controls the expression of multiple virulence factors in response to extracellular signaling molecules called autoinducers. Involved, among others, in the transcriptional regulation of genes that are responsible for rhamnolipid surfactant biosynthesis. Acts by binding to a specific sequence in the rhlAB regulatory region, both in the presence and in the absence of its autoinducer. In the former case it activates transcription of the promoter, whereas in the latter it acts as a transcriptional repressor. Also regulates the expression of the rmlBDAC operon, encoding dTDP-L-rhamnose biosynthetic enzymes, by binding to the rml box in the promoter region. In addition, is involved in the regulation of the production of elastase (lasB) and pyocyanine. In Pseudomonas aeruginosa (strain ATCC 15692 / DSM 22644 / CIP 104116 / JCM 14847 / LMG 12228 / 1C / PRS 101 / PAO1), this protein is HTH-type quorum-sensing regulator RhlR.